The sequence spans 237 residues: Uridylate kinase (237 aa).

12 to 15 (KLSG) serves as a coordination point for ATP. The interval 20–25 (GEDGLG) is involved in allosteric activation by GTP. Gly-54 contributes to the UMP binding site. Residues Gly-55 and Arg-59 each contribute to the ATP site. UMP is bound by residues Asp-74 and 135 to 142 (TGNPFFTT). ATP-binding residues include Thr-162, Tyr-168, and Asp-171.

This sequence belongs to the UMP kinase family. In terms of assembly, homohexamer.

The protein localises to the cytoplasm. It catalyses the reaction UMP + ATP = UDP + ADP. The protein operates within pyrimidine metabolism; CTP biosynthesis via de novo pathway; UDP from UMP (UMPK route): step 1/1. Allosterically activated by GTP. Inhibited by UTP. Its function is as follows. Catalyzes the reversible phosphorylation of UMP to UDP. The sequence is that of Uridylate kinase from Haemophilus influenzae (strain PittEE).